The following is a 257-amino-acid chain: Type III pantothenate kinase (257 aa).

Residue 6 to 13 coordinates ATP; that stretch reads EQGNTNTL. 107–110 lines the substrate pocket; sequence GADR. The active-site Proton acceptor is the Asp-109. Asp-129 contacts K(+). Thr-132 contributes to the ATP binding site. Thr-184 is a binding site for substrate.

Belongs to the type III pantothenate kinase family. Homodimer. NH4(+) is required as a cofactor. It depends on K(+) as a cofactor.

The protein resides in the cytoplasm. It catalyses the reaction (R)-pantothenate + ATP = (R)-4'-phosphopantothenate + ADP + H(+). It participates in cofactor biosynthesis; coenzyme A biosynthesis; CoA from (R)-pantothenate: step 1/5. Functionally, catalyzes the phosphorylation of pantothenate (Pan), the first step in CoA biosynthesis. This chain is Type III pantothenate kinase, found in Phenylobacterium zucineum (strain HLK1).